We begin with the raw amino-acid sequence, 87 residues long: Small ribosomal subunit protein bS20 (87 aa).

Residues 1 to 10 (MANIKSKQKR) show a composition bias toward basic residues. A disordered region spans residues 1–27 (MANIKSKQKRILTNEKSRQRNKSVRSA).

It belongs to the bacterial ribosomal protein bS20 family.

Its function is as follows. Binds directly to 16S ribosomal RNA. The chain is Small ribosomal subunit protein bS20 from Corynebacterium aurimucosum (strain ATCC 700975 / DSM 44827 / CIP 107346 / CN-1) (Corynebacterium nigricans).